Here is a 264-residue protein sequence, read N- to C-terminus: Thymidylate synthase (264 aa).

A dUMP-binding site is contributed by Arg-21. Residue His-51 participates in (6R)-5,10-methylene-5,6,7,8-tetrahydrofolate binding. Arg-126 to Arg-127 serves as a coordination point for dUMP. Catalysis depends on Cys-146, which acts as the Nucleophile. Residues Arg-166–Asp-169, Asn-177, and His-207–Tyr-209 contribute to the dUMP site. Asp-169 lines the (6R)-5,10-methylene-5,6,7,8-tetrahydrofolate pocket. Ala-263 provides a ligand contact to (6R)-5,10-methylene-5,6,7,8-tetrahydrofolate.

It belongs to the thymidylate synthase family. Bacterial-type ThyA subfamily. As to quaternary structure, homodimer.

Its subcellular location is the cytoplasm. It carries out the reaction dUMP + (6R)-5,10-methylene-5,6,7,8-tetrahydrofolate = 7,8-dihydrofolate + dTMP. It functions in the pathway pyrimidine metabolism; dTTP biosynthesis. Functionally, catalyzes the reductive methylation of 2'-deoxyuridine-5'-monophosphate (dUMP) to 2'-deoxythymidine-5'-monophosphate (dTMP) while utilizing 5,10-methylenetetrahydrofolate (mTHF) as the methyl donor and reductant in the reaction, yielding dihydrofolate (DHF) as a by-product. This enzymatic reaction provides an intracellular de novo source of dTMP, an essential precursor for DNA biosynthesis. This Xenorhabdus nematophila (strain ATCC 19061 / DSM 3370 / CCUG 14189 / LMG 1036 / NCIMB 9965 / AN6) protein is Thymidylate synthase.